We begin with the raw amino-acid sequence, 537 residues long: Eukaryotic translation initiation factor 3 subunit L (537 aa).

Positions 1–19 (MSRRVEFDMSHEDHTDRRR) are enriched in basic and acidic residues. The segment at 1–28 (MSRRVEFDMSHEDHTDRRRTNTFSSEED) is disordered. The PCI domain occupies 297–485 (EATKMFVNCL…GPSTVDDDEP (189 aa)).

The protein belongs to the eIF-3 subunit L family. As to quaternary structure, component of the eukaryotic translation initiation factor 3 (eIF-3) complex.

The protein localises to the cytoplasm. In terms of biological role, component of the eukaryotic translation initiation factor 3 (eIF-3) complex, which is involved in protein synthesis of a specialized repertoire of mRNAs and, together with other initiation factors, stimulates binding of mRNA and methionyl-tRNAi to the 40S ribosome. The eIF-3 complex specifically targets and initiates translation of a subset of mRNAs involved in cell proliferation. This is Eukaryotic translation initiation factor 3 subunit L from Caenorhabditis briggsae.